Consider the following 148-residue polypeptide: Large ribosomal subunit protein uL15 (148 aa).

Residues 1–30 are compositionally biased toward basic residues; sequence MPSRLRKTRKLRGHVSHGHGRIGKHRKHPG. A disordered region spans residues 1–38; that stretch reads MPSRLRKTRKLRGHVSHGHGRIGKHRKHPGGRGNAGGL. Residue His39 is modified to (3S)-3-hydroxyhistidine. Lys47 and Lys55 each carry N6-acetyllysine. The residue at position 68 (Ser68) is a Phosphoserine. Position 110 is an N6-acetyllysine (Lys110).

It belongs to the universal ribosomal protein uL15 family. In terms of processing, hydroxylated on His-39 by MINA.

This is Large ribosomal subunit protein uL15 (RPL27A) from Pan troglodytes (Chimpanzee).